An 801-amino-acid polypeptide reads, in one-letter code: MLVSYKWLKELVDIDVPSHELAEKMSTTGIEVEGVDVPAEGLSKLVVGHVLSCEDVPETHLHLCQVDTGEEESRQIVCGAPNITAGIKVIVALPGARIADNYKIKKGKIRGMESLGMICSLQELGLPDSIIPKEYSDGIQILPEDAVPGESIFPYLDLDDEIIELSITPNRADALSMRGVAHEVAAIYDKSVHFEDKVLTESDKKAADLIKVAIASDKVLTYKARVVENVTIKPSPQWLQNLLMNAGIRPINNVVDVTNYVLLYFGQPMHAFDLDKFEGKDILARQAKAGEKLVTLDGEARDLIEEDLVITVADKPVALAGVMGGAATEIDASSKNVVLEAAVFDGKSVRKTSSRLNLRSESSSRFEKGVNYADVVKALDFAAAMLTELADGTVLAGQVSAGAVPTDDIQVSTSLDYVNVRLGTDLVFSDIESVFARLGFGLSGNDEKFTVSVPRRRWDISIQADLVEEIARIYGYDKLPTTLPEAAGTVGELTKTQKLRRKIRNLAEGSGLSEIISYALTTPEKAVAFTPNPTKITELMWPMTVDRSALRQNIVSGMLDTIAYNVARKSNNLALYEIGKVFEQTADPKKDLPKEIDTFAFALTGLVTEKDFQTAATPVDFFYAKGVLEAILAKLEITVQFVATKEMANMHPGRTALIERDGQVIGYLGQVHPQTAKLYDIPETYVAEVNLNALEAALKSDLVFEDITKFPAVSRDIALLLSEKVSHQDILDAIAASGVKRLIKVKLFDVYAGEKLGVGKKSMAYSLTFQNPNDNLTDEEVAKYMEKITSALTEKVGAEVR.

Positions 39-153 (AEGLSKLVVG…EDAVPGESIF (115 aa)) constitute a tRNA-binding domain. A B5 domain is found at 406–481 (TDDIQVSTSL…RIYGYDKLPT (76 aa)). Aspartate 459, aspartate 465, glutamate 468, and glutamate 469 together coordinate Mg(2+). The FDX-ACB domain occupies 708–801 (TKFPAVSRDI…LTEKVGAEVR (94 aa)).

The protein belongs to the phenylalanyl-tRNA synthetase beta subunit family. Type 1 subfamily. Tetramer of two alpha and two beta subunits. The cofactor is Mg(2+).

The protein localises to the cytoplasm. It carries out the reaction tRNA(Phe) + L-phenylalanine + ATP = L-phenylalanyl-tRNA(Phe) + AMP + diphosphate + H(+). The sequence is that of Phenylalanine--tRNA ligase beta subunit from Streptococcus mutans serotype c (strain ATCC 700610 / UA159).